We begin with the raw amino-acid sequence, 458 residues long: 5-hydroxytryptamine receptor 2C (458 aa).

An N-terminal signal peptide occupies residues 1–32; it reads MVNLRNAVHSFLVHLIGLLVWQSDISVSPVAA. At 33 to 55 the chain is on the extracellular side; it reads IVTDIFNTSDGGRFKFPDGVQNW. A glycan (N-linked (GlcNAc...) asparagine) is linked at Asn-39. The helical transmembrane segment at 56 to 80 threads the bilayer; that stretch reads PALSIVIIIIMTIGGNILVIMAVSM. Residues 81–86 lie on the Cytoplasmic side of the membrane; it reads EKKLHN. A helical membrane pass occupies residues 87 to 111; the sequence is ATNYFLMSLAIADMLVGLLVMPLSL. Residues 112–128 lie on the Extracellular side of the membrane; it reads LAILYDYVWPLPRYLCP. An intrachain disulfide couples Cys-127 to Cys-207. The helical transmembrane segment at 129–151 threads the bilayer; that stretch reads VWISLDVLFSTASIMHLCAISLD. Thr-139 serves as a coordination point for ergotamine. The short motif at 151–153 is the DRY motif; important for ligand-induced conformation changes element; the sequence is DRY. Over 152–167 the chain is Cytoplasmic; that stretch reads RYVAIRNPIEHSRFNS. The chain crosses the membrane as a helical span at residues 168–189; that stretch reads RTKAIMKIAIVWAISIGVSVPI. Topologically, residues 190–213 are extracellular; the sequence is PVIGLRDEEKVFVNNTTCVLNDPN. An N-linked (GlcNAc...) asparagine glycan is attached at Asn-204. Leu-209 contributes to the ergotamine binding site. Residues 214-236 traverse the membrane as a helical segment; the sequence is FVLIGSFVAFFIPLTIMVITYCL. The Cytoplasmic portion of the chain corresponds to 237-311; sequence TIYVLRRQAL…AINNERKASK (75 aa). The segment at 274-301 is disordered; sequence EENSANPNQDQNARRRKKKERRPRGTMQ. The segment covering 287 to 297 has biased composition (basic residues); that stretch reads RRRKKKERRPR. A helical membrane pass occupies residues 312–336; sequence VLGIVFFVFLIMWCPFFITNILSVL. Cys-337 and Cys-341 are joined by a disulfide. The Extracellular portion of the chain corresponds to 337–347; sequence CEKSCNQKLME. Residues 348 to 370 traverse the membrane as a helical segment; the sequence is KLLNVFVWIGYVCSGINPLVYTL. Residues 364 to 368 carry the NPxxY motif; important for ligand-induced conformation changes and signaling motif; it reads NPLVY. Over 371 to 458 the chain is Cytoplasmic; that stretch reads FNKIYRRAFS…SVVSERISSV (88 aa). Residues 456-458 carry the PDZ-binding motif; the sequence is SSV.

This sequence belongs to the G-protein coupled receptor 1 family. Interacts with MPDZ. Interacts with ARRB2. Interacts with MPP3; this interaction stabilizes the receptor at the plasma membrane and prevents the desensitization of the HTR2C receptor-mediated calcium response. N-glycosylated. As to expression, detected in brain.

The protein resides in the cell membrane. Its activity is regulated as follows. Inhibited by inverse agonist ritanserin. Functionally, G-protein coupled receptor for 5-hydroxytryptamine (serotonin). Also functions as a receptor for various drugs and psychoactive substances, including ergot alkaloid derivatives, 1-2,5,-dimethoxy-4-iodophenyl-2-aminopropane (DOI) and lysergic acid diethylamide (LSD). Ligand binding causes a conformation change that triggers signaling via guanine nucleotide-binding proteins (G proteins) and modulates the activity of downstream effectors. HTR2C is coupled to G(q)/G(11) G alpha proteins and activates phospholipase C-beta, releasing diacylglycerol (DAG) and inositol 1,4,5-trisphosphate (IP3) second messengers that modulate the activity of phosphatidylinositol 3-kinase and promote the release of Ca(2+) ions from intracellular stores, respectively. Beta-arrestin family members inhibit signaling via G proteins and mediate activation of alternative signaling pathways. Regulates neuronal activity via the activation of short transient receptor potential calcium channels in the brain, and thereby modulates the activation of pro-opiomelanocortin neurons and the release of CRH that then regulates the release of corticosterone. Plays a role in the regulation of appetite and eating behavior, responses to anxiogenic stimuli and stress. Plays a role in insulin sensitivity and glucose homeostasis. This Homo sapiens (Human) protein is 5-hydroxytryptamine receptor 2C.